Reading from the N-terminus, the 90-residue chain is Small ribosomal subunit protein uS15c (90 aa).

This sequence belongs to the universal ribosomal protein uS15 family. As to quaternary structure, part of the 30S ribosomal subunit.

The protein localises to the plastid. It is found in the chloroplast. This chain is Small ribosomal subunit protein uS15c (rps15), found in Daucus carota (Wild carrot).